The following is a 224-amino-acid chain: Small ribosomal subunit protein uS3 (224 aa).

A KH type-2 domain is found at 38–106 (LREFVKEKLG…EVYLNVVEVR (69 aa)).

This sequence belongs to the universal ribosomal protein uS3 family. As to quaternary structure, part of the 30S ribosomal subunit. Forms a tight complex with proteins S10 and S14.

In terms of biological role, binds the lower part of the 30S subunit head. Binds mRNA in the 70S ribosome, positioning it for translation. The sequence is that of Small ribosomal subunit protein uS3 from Anaeromyxobacter dehalogenans (strain 2CP-C).